The chain runs to 327 residues: Sideroflexin-2 (327 aa).

Transmembrane regions (helical) follow at residues 99 to 119, 143 to 163, 175 to 195, 228 to 248, and 267 to 287; these read GMLITGGMLAFYRTVPAVVLW, VTQLGVAYVSATTSALVAAIG, LFQRFVPFAAVAAANFVNIPL, EVVVSRIAMAAPGMLVLPLIM, and FQTLLVGCFLCFMVPTACALF.

This sequence belongs to the sideroflexin family.

Its subcellular location is the mitochondrion membrane. It catalyses the reaction L-serine(in) = L-serine(out). In terms of biological role, mitochondrial amino-acid transporter that mediates transport of serine into mitochondria. The protein is Sideroflexin-2 of Drosophila melanogaster (Fruit fly).